The chain runs to 244 residues: MSHYHEQFLKQNPLAVLGVLRDLHKAAIPLRLSWNGGQLISKLLAITPDKLVLDFGSQAEDNIAVLKAQHITITAETQGAKVEFTVEQLQQSEYLQLPAFITVPPPTLWFVQRRRYFRISAPLHPPYFCQTKLADNSTLRFRLYDLSLGGMGALLETAKPAELQEGMRFAQIEVNMGQWGVFHFDAQLISISERKVIDGKNETITTPRLSFRFLNVSPTVERQLQRIIFSLEREAREKADKVRD.

Positions Gln112 to Ser230 constitute a PilZ domain.

The protein belongs to the YcgR family. Monomer. Interacts with MotA in the flagellar basal bodies. In another study it was not seen to interact with MotA, but instead with FliM and FliG, also in the flagellar basal body.

The protein localises to the bacterial flagellum basal body. In terms of biological role, acts as a flagellar brake, regulating swimming and swarming in a bis-(3'-5') cyclic diguanylic acid (c-di-GMP)-dependent manner. When bound to c-di-GMP it binds to elements of the flagellar motor (MotA and/or FliG and FliM, binding to FliM also occurs in the absence of c-di-GMP), causing the motor to slow down. Thus, increasing levels of c-di-GMP lead to decreased motility. Probably binds 1 c-di-GMP dimer per subunit. The protein is Flagellar brake protein YcgR (ycgR) of Escherichia coli (strain K12).